The sequence spans 296 residues: Small ribosomal subunit protein uS2 (296 aa).

A disordered region spans residues 252–296; that stretch reads TSSKTVSKLKQSKKLSKTQNIDEETNTEFDQALGGACENNNSDNT.

This sequence belongs to the universal ribosomal protein uS2 family.

This chain is Small ribosomal subunit protein uS2 (rpsB), found in Rickettsia prowazekii (strain Madrid E).